The chain runs to 445 residues: Histidinol dehydrogenase (445 aa).

The NAD(+) site is built by Tyr144, Gln205, and Asn228. Positions 251, 273, and 276 each coordinate substrate. Zn(2+) contacts are provided by Gln273 and His276. Active-site proton acceptor residues include Glu341 and His342. 4 residues coordinate substrate: His342, Asp375, Glu429, and His434. Asp375 is a binding site for Zn(2+). A Zn(2+)-binding site is contributed by His434.

It belongs to the histidinol dehydrogenase family. Zn(2+) serves as cofactor.

The catalysed reaction is L-histidinol + 2 NAD(+) + H2O = L-histidine + 2 NADH + 3 H(+). The protein operates within amino-acid biosynthesis; L-histidine biosynthesis; L-histidine from 5-phospho-alpha-D-ribose 1-diphosphate: step 9/9. Functionally, catalyzes the sequential NAD-dependent oxidations of L-histidinol to L-histidinaldehyde and then to L-histidine. This Cupriavidus pinatubonensis (strain JMP 134 / LMG 1197) (Cupriavidus necator (strain JMP 134)) protein is Histidinol dehydrogenase.